The primary structure comprises 447 residues: GTPase Der (447 aa).

2 consecutive EngA-type G domains span residues 4–165 and 180–357; these read KIIT…SVEE and LQIV…KIWN. GTP contacts are provided by residues 10–17, 57–61, 119–122, 186–193, 233–237, and 298–301; these read GRPNVGKS, DTPGL, NKCE, GRPNAGKS, DTAGL, and NKWD. The region spanning 358–443 is the KH-like domain; sequence KKITTNKLNK…PIRFTYVKNK (86 aa).

It belongs to the TRAFAC class TrmE-Era-EngA-EngB-Septin-like GTPase superfamily. EngA (Der) GTPase family. As to quaternary structure, associates with the 50S ribosomal subunit.

Its function is as follows. GTPase that plays an essential role in the late steps of ribosome biogenesis. This chain is GTPase Der, found in Rickettsia prowazekii (strain Madrid E).